Reading from the N-terminus, the 52-residue chain is Protein RepA (52 aa).

The segment at residues K20 to V40 is a DNA-binding region (H-T-H motif).

The protein belongs to the transcriptional regulatory CopG/NikR family. Homodimer.

Regulates the plasmid copy number. RepA binds to the repAB promoter thus controlling the synthesis of the plasmid replication initiator protein RepB. The polypeptide is Protein RepA (repA) (Lactiplantibacillus plantarum (Lactobacillus plantarum)).